Consider the following 204-residue polypeptide: Large ribosomal subunit protein eL15 (204 aa).

The segment at 155–204 (VHKHREQRGLTSAGRKSRGLGKGWRFSATRGGSQAKNWKRKNTKVFHRKR) is disordered. The span at 191–204 (NWKRKNTKVFHRKR) shows a compositional bias: basic residues.

It belongs to the eukaryotic ribosomal protein eL15 family.

The polypeptide is Large ribosomal subunit protein eL15 (rpl-15) (Caenorhabditis elegans).